We begin with the raw amino-acid sequence, 1178 residues long: DNA-directed RNA polymerase subunit beta (1178 aa).

The segment at 1-37 (MLEGCILADSRQSKTAASPSPSRPQSSSNNSVPGAPN) is disordered. A compositionally biased stretch (low complexity) spans 18 to 33 (SPSPSRPQSSSNNSVP).

This sequence belongs to the RNA polymerase beta chain family. The RNAP catalytic core consists of 2 alpha, 1 beta, 1 beta' and 1 omega subunit. When a sigma factor is associated with the core the holoenzyme is formed, which can initiate transcription.

It carries out the reaction RNA(n) + a ribonucleoside 5'-triphosphate = RNA(n+1) + diphosphate. DNA-dependent RNA polymerase catalyzes the transcription of DNA into RNA using the four ribonucleoside triphosphates as substrates. The polypeptide is DNA-directed RNA polymerase subunit beta (Mycobacterium tuberculosis (strain CDC 1551 / Oshkosh)).